Here is a 317-residue protein sequence, read N- to C-terminus: MIEIKHLKTLQALRNSGSLAAAAAVLHQTQSALSHQFSDLEQRLGFRLFVRKSQPLRFTPQGEVLLQLANQVLPQISRALQACNEPQQTRLRIAIECHSCIQWLTPALENFRASWPQVEMDFTSGVTFDPQPALQQGELDLVMTSDILPRSGLHYSPMFDFEVRLVLAPDHPLASKTQITPEDLASETLLIYPVQRSRLDVWRHFLQPAGISPLLKSVDNTLLLIQMVAARMGIAALPHWVVESVERQGLVVTKTLGDGLWSRLYAAVRDGDQRQAVTEAFIRSTRDHACDHLPFVRSAERPIFDAPTAKPGSQPRL.

In terms of domain architecture, HTH lysR-type spans 1 to 59 (MIEIKHLKTLQALRNSGSLAAAAAVLHQTQSALSHQFSDLEQRLGFRLFVRKSQPLRFT). Positions 19-38 (LAAAAAVLHQTQSALSHQFS) form a DNA-binding region, H-T-H motif.

Belongs to the LysR transcriptional regulatory family.

The protein localises to the cytoplasm. Its function is as follows. Control of the last step in methionine biosynthesis; MetR is a positive activator of the metA, metE and metH genes. It is also a negative regulator of its own expression. This Salmonella typhi protein is HTH-type transcriptional regulator MetR (metR).